The chain runs to 137 residues: NADH-quinone oxidoreductase subunit A (137 aa).

The next 3 helical transmembrane spans lie at 12–32, 66–86, and 95–115; these read WGFAIFLLGVVGLCAFMLGLS, FYLVAMLFVIFDIEALFLFAW, and WTGFVEALVFIAILLAGLVYL.

Belongs to the complex I subunit 3 family. As to quaternary structure, NDH-1 is composed of 13 different subunits. Subunits NuoA, H, J, K, L, M, N constitute the membrane sector of the complex.

It localises to the cell inner membrane. It carries out the reaction a quinone + NADH + 5 H(+)(in) = a quinol + NAD(+) + 4 H(+)(out). In terms of biological role, NDH-1 shuttles electrons from NADH, via FMN and iron-sulfur (Fe-S) centers, to quinones in the respiratory chain. The immediate electron acceptor for the enzyme in this species is believed to be ubiquinone. Couples the redox reaction to proton translocation (for every two electrons transferred, four hydrogen ions are translocated across the cytoplasmic membrane), and thus conserves the redox energy in a proton gradient. The chain is NADH-quinone oxidoreductase subunit A from Pseudomonas savastanoi pv. phaseolicola (strain 1448A / Race 6) (Pseudomonas syringae pv. phaseolicola (strain 1448A / Race 6)).